A 282-amino-acid polypeptide reads, in one-letter code: Elongation factor Ts (282 aa).

The interval 79-82 (TDFV) is involved in Mg(2+) ion dislocation from EF-Tu.

The protein belongs to the EF-Ts family.

The protein localises to the cytoplasm. Functionally, associates with the EF-Tu.GDP complex and induces the exchange of GDP to GTP. It remains bound to the aminoacyl-tRNA.EF-Tu.GTP complex up to the GTP hydrolysis stage on the ribosome. This Shewanella sediminis (strain HAW-EB3) protein is Elongation factor Ts.